A 112-amino-acid polypeptide reads, in one-letter code: Putative transposase YkgN (112 aa).

The protein belongs to the transposase 8 family.

This is Putative transposase YkgN (ykgN) from Escherichia coli (strain K12).